Here is a 50-residue protein sequence, read N- to C-terminus: MQTLSSAPDPAVSIAVTILALLLALTGFGLWTAFGPKAAKLTDPWDDHDD.

Residues 14 to 34 (IAVTILALLLALTGFGLWTAF) traverse the membrane as a helical segment.

This sequence belongs to the PsbN family.

The protein localises to the cellular thylakoid membrane. Functionally, may play a role in photosystem I and II biogenesis. This is Protein PsbN from Prochlorococcus marinus (strain MIT 9301).